The sequence spans 336 residues: N-acetyl-gamma-glutamyl-phosphate reductase (336 aa).

Cys-156 is a catalytic residue.

Belongs to the NAGSA dehydrogenase family. Type 1 subfamily.

The protein resides in the cytoplasm. The enzyme catalyses N-acetyl-L-glutamate 5-semialdehyde + phosphate + NADP(+) = N-acetyl-L-glutamyl 5-phosphate + NADPH + H(+). Its pathway is amino-acid biosynthesis; L-arginine biosynthesis; N(2)-acetyl-L-ornithine from L-glutamate: step 3/4. In terms of biological role, catalyzes the NADPH-dependent reduction of N-acetyl-5-glutamyl phosphate to yield N-acetyl-L-glutamate 5-semialdehyde. The sequence is that of N-acetyl-gamma-glutamyl-phosphate reductase from Moritella profunda.